A 298-amino-acid chain; its full sequence is uncharacterized protein (298 aa).

Its subcellular location is the cytoplasm. It localises to the nucleus. This is an uncharacterized protein from Schizosaccharomyces pombe (strain 972 / ATCC 24843) (Fission yeast).